A 539-amino-acid polypeptide reads, in one-letter code: Phosphoenolpyruvate carboxykinase (ATP) (539 aa).

Substrate is bound by residues Arg-61, Tyr-195, and Lys-201. Residues Lys-201, His-220, and 238 to 246 (GLSGTGKTT) contribute to the ATP site. Lys-201 and His-220 together coordinate Mn(2+). Asp-259 is a Mn(2+) binding site. ATP-binding residues include Glu-287, Arg-325, and Thr-450. Arg-325 contacts substrate.

Belongs to the phosphoenolpyruvate carboxykinase (ATP) family. Mn(2+) serves as cofactor.

It is found in the cytoplasm. It catalyses the reaction oxaloacetate + ATP = phosphoenolpyruvate + ADP + CO2. It participates in carbohydrate biosynthesis; gluconeogenesis. Functionally, involved in the gluconeogenesis. Catalyzes the conversion of oxaloacetate (OAA) to phosphoenolpyruvate (PEP) through direct phosphoryl transfer between the nucleoside triphosphate and OAA. This chain is Phosphoenolpyruvate carboxykinase (ATP), found in Methylorubrum extorquens (strain CM4 / NCIMB 13688) (Methylobacterium extorquens).